Here is a 343-residue protein sequence, read N- to C-terminus: Holliday junction branch migration complex subunit RuvB (343 aa).

The tract at residues 1 to 23 (MSDDFEVVRPEEQAGDEKDRDLR) is disordered. The segment at 1-183 (MSDDFEVVRP…FGIVQRFEFY (183 aa)) is large ATPase domain (RuvB-L). ATP is bound by residues Leu22, Arg23, Gly64, Lys67, Thr68, Thr69, 130-132 (EDY), Arg173, Tyr183, and Arg220. Thr68 provides a ligand contact to Mg(2+). The tract at residues 184 to 254 (SHEELASIIS…TVAAGLKQLN (71 aa)) is small ATPAse domain (RuvB-S). Positions 257–343 (GLGLETYDRQ…LGDGQEGLFD (87 aa)) are head domain (RuvB-H). The DNA site is built by Arg312 and Arg317.

The protein belongs to the RuvB family. In terms of assembly, homohexamer. Forms an RuvA(8)-RuvB(12)-Holliday junction (HJ) complex. HJ DNA is sandwiched between 2 RuvA tetramers; dsDNA enters through RuvA and exits via RuvB. An RuvB hexamer assembles on each DNA strand where it exits the tetramer. Each RuvB hexamer is contacted by two RuvA subunits (via domain III) on 2 adjacent RuvB subunits; this complex drives branch migration. In the full resolvosome a probable DNA-RuvA(4)-RuvB(12)-RuvC(2) complex forms which resolves the HJ.

It is found in the cytoplasm. It catalyses the reaction ATP + H2O = ADP + phosphate + H(+). In terms of biological role, the RuvA-RuvB-RuvC complex processes Holliday junction (HJ) DNA during genetic recombination and DNA repair, while the RuvA-RuvB complex plays an important role in the rescue of blocked DNA replication forks via replication fork reversal (RFR). RuvA specifically binds to HJ cruciform DNA, conferring on it an open structure. The RuvB hexamer acts as an ATP-dependent pump, pulling dsDNA into and through the RuvAB complex. RuvB forms 2 homohexamers on either side of HJ DNA bound by 1 or 2 RuvA tetramers; 4 subunits per hexamer contact DNA at a time. Coordinated motions by a converter formed by DNA-disengaged RuvB subunits stimulates ATP hydrolysis and nucleotide exchange. Immobilization of the converter enables RuvB to convert the ATP-contained energy into a lever motion, pulling 2 nucleotides of DNA out of the RuvA tetramer per ATP hydrolyzed, thus driving DNA branch migration. The RuvB motors rotate together with the DNA substrate, which together with the progressing nucleotide cycle form the mechanistic basis for DNA recombination by continuous HJ branch migration. Branch migration allows RuvC to scan DNA until it finds its consensus sequence, where it cleaves and resolves cruciform DNA. This Treponema denticola (strain ATCC 35405 / DSM 14222 / CIP 103919 / JCM 8153 / KCTC 15104) protein is Holliday junction branch migration complex subunit RuvB.